We begin with the raw amino-acid sequence, 299 residues long: Probable lipid kinase YegS (299 aa).

A DAGKc domain is found at 2–133 (ANFPASLLIL…IDMARVNDKT (132 aa)). ATP is bound by residues threonine 40, 66-72 (GDGTINE), and threonine 95. Residues leucine 215, aspartate 218, and leucine 220 each coordinate Mg(2+). Residue glutamate 271 is the Proton acceptor of the active site.

This sequence belongs to the diacylglycerol/lipid kinase family. YegS lipid kinase subfamily. Mg(2+) serves as cofactor. Ca(2+) is required as a cofactor.

It localises to the cytoplasm. In terms of biological role, probably phosphorylates lipids; the in vivo substrate is unknown. The polypeptide is Probable lipid kinase YegS (Salmonella heidelberg (strain SL476)).